Here is a 206-residue protein sequence, read N- to C-terminus: Macrophage immunometabolism regulator (206 aa).

An N-acetylmethionine modification is found at Met-1. Positions 1–41 (MEVDINGESRSTLTTLPFPGAEANSPGKAEAEKPRCSSTPC) are disordered. Phosphoserine occurs at positions 25, 140, and 167.

It belongs to the UNC119-binding protein family. In terms of assembly, interacts with UNC119 and UNC119B; interaction preferentially takes place when UNC119 and UNC119B are unliganded with myristoylated proteins. Post-translationally, phosphorylated. As to expression, high expression in normal macrophages, monocytes, and cultured rheumatoid arthritis synovial fibroblasts (RASFs), with lower expression in B- and T-cells, and little to no expression in other tissues and cell lines.

The protein localises to the cytoplasm. It is found in the cell projection. It localises to the cilium. In terms of biological role, regulates the macrophage function, by enhancing the resolution of inflammation and wound repair functions mediated by M2 macrophages. The regulation of macrophage function is, due at least in part, to its ability to inhibit glycolysis. May also play a role in trafficking of proteins via its interaction with UNC119 and UNC119B cargo adapters: may help the release of UNC119 and UNC119B cargo or the recycling of UNC119 and UNC119B. May play a role in ciliary membrane localization via its interaction with UNC119B and protein transport into photoreceptor cells. In Homo sapiens (Human), this protein is Macrophage immunometabolism regulator.